The following is a 350-amino-acid chain: MAAAAATPRLEAPEPMPSYAQMLQRSWASALAAAQGCGDCGWGLARRGLAEHAHLAAPELLLAVLCALGWTALRWAATTHIFRPLAKRCRLQPRDAARLPESAWKLLFYLACWSYCAYLLLGTSYPFFHDPPSVFYDWRSGMAVPWDIAVAYLLQGSFYCHSIYATVYMDSWRKDSVVMLVHHVVTLLLIASSYAFRYHNVGLLVFFLHDVSDVQLEFTKLNIYFKARGGAYHRLHGLVANLGCLSFCFCWFWFRLYWFPLKVLYATCHCSLQSVPDIPYYFFFNILLLLLMVMNIYWFLYIVAFAAKVLTGQMRELEDLREYDTLEAQTAKPCKAEKPLRNGLVKDKLF.

Position 2 is an N-acetylalanine (Ala-2). The next 6 helical transmembrane spans lie at 53–73, 103–123, 148–168, 176–196, 239–259, and 287–307; these read AHLA…WTAL, AWKL…LLGT, IAVA…ATVY, SVVM…SYAF, VANL…LYWF, and LLLL…AFAA. In terms of domain architecture, TLC spans 97–311; it reads ARLPESAWKL…IVAFAAKVLT (215 aa).

Acetylated. Deacetylation by SIRT3 increases enzyme activity and promotes mitochondrial ceramide accumulation. In terms of tissue distribution, expressed in brain, skeletal muscle, heart and perigonadal white adipose tissue.

Its subcellular location is the endoplasmic reticulum membrane. The catalysed reaction is a sphingoid base + octadecanoyl-CoA = an N-octadecanoyl-sphingoid base + CoA + H(+). It catalyses the reaction sphinganine + octadecanoyl-CoA = N-(octadecanoyl)-sphinganine + CoA + H(+). The enzyme catalyses hexadecasphinganine + octadecanoyl-CoA = N-octadecanoylhexadecasphinganine + CoA + H(+). It carries out the reaction sphing-4-enine + octadecanoyl-CoA = N-octadecanoylsphing-4-enine + CoA + H(+). The catalysed reaction is heptadecasphing-4-enine + octadecanoyl-CoA = N-octadecanoyl-heptadecasphing-4-enine + CoA + H(+). It catalyses the reaction 2-hydroxyoctadecanoyl-CoA + sphinganine = N-(2-hydroxyoctadecanoyl)-sphinganine + CoA + H(+). The enzyme catalyses eicosanoyl-CoA + sphinganine = N-eicosanoylsphinganine + CoA + H(+). It participates in lipid metabolism; sphingolipid metabolism. Its activity is regulated as follows. Inhibited by fumonisin B1. In terms of biological role, ceramide synthase that catalyzes the transfer of the acyl chain from acyl-CoA to a sphingoid base, with high selectivity toward stearoyl-CoA (octadecanoyl-CoA; C18:0-CoA). N-acylates sphinganine and sphingosine bases to form dihydroceramides and ceramides in de novo synthesis and salvage pathways, respectively. Plays a predominant role in skeletal muscle in regulating C18 ceramide and dihydroceramide levels with an impact on whole-body glucose metabolism and insulin sensitivity. Protects from diet-induced obesity by suppressing the uptake of glucose in multiple organs in a FGF21-dependent way. Generates C18 ceramides in the brain, playing a critical role in cerebellar development and Purkinje cell function. In response to cellular stress mediates mitophagy, a known defense mechanism against cell transformation and aging. Upon mitochondria fission, generates C18 ceramides that anchor lipidated MAP1LC3B/LC3B-II autophagolysosomes to outer mitochondrial membranes to eliminate damaged mitochondria. In Mus musculus (Mouse), this protein is Ceramide synthase 1.